The primary structure comprises 198 residues: MSTSSVPSLTYFQGRGLGQFSRVLLSYLGIPYENITVTEISDALRATLPYGQLPIYRDGDFVLTQSSTIARYIAKKHNFMGKNLEEEFLVDQIVTAIHADIFPAFNNPVPEKLQKLYEKYFGSFEKKLQETGFLVGSSVTLADLYVYVGFDYIRFRGEAALSSELSDEKYPKIAELKKFFESNEGVAKYIKERPETKF.

N-acetylserine is present on S2. The 77-residue stretch at 5 to 81 (SVPSLTYFQG…YIAKKHNFMG (77 aa)) folds into the GST N-terminal domain. Glutathione is bound by residues Y11, R45, 52–53 (QL), and 65–66 (QS). The 116-residue stretch at 83–198 (NLEEEFLVDQ…YIKERPETKF (116 aa)) folds into the GST C-terminal domain.

Belongs to the GST superfamily. Alpha family.

The enzyme catalyses RX + glutathione = an S-substituted glutathione + a halide anion + H(+). In terms of biological role, conjugation of reduced glutathione to a wide number of exogenous and endogenous hydrophobic electrophiles. The polypeptide is Putative glutathione S-transferase alpha-2 (gsta2-1) (Dictyostelium discoideum (Social amoeba)).